The sequence spans 269 residues: Phosphonoacetaldehyde hydrolase (269 aa).

Residue Asp-9 is the Nucleophile of the active site. 2 residues coordinate Mg(2+): Asp-9 and Ala-11. Lys-50 acts as the Schiff-base intermediate with substrate in catalysis. Asp-184 serves as a coordination point for Mg(2+).

It belongs to the HAD-like hydrolase superfamily. PhnX family. Homodimer. It depends on Mg(2+) as a cofactor.

It catalyses the reaction phosphonoacetaldehyde + H2O = acetaldehyde + phosphate + H(+). Involved in phosphonate degradation. This Lysinibacillus sphaericus (strain C3-41) protein is Phosphonoacetaldehyde hydrolase.